The following is a 292-amino-acid chain: Elongation factor Ts (292 aa).

Positions 82 to 85 (TDFV) are involved in Mg(2+) ion dislocation from EF-Tu.

Belongs to the EF-Ts family.

Its subcellular location is the cytoplasm. Its function is as follows. Associates with the EF-Tu.GDP complex and induces the exchange of GDP to GTP. It remains bound to the aminoacyl-tRNA.EF-Tu.GTP complex up to the GTP hydrolysis stage on the ribosome. In Bordetella parapertussis (strain 12822 / ATCC BAA-587 / NCTC 13253), this protein is Elongation factor Ts.